The sequence spans 150 residues: Monothiol glutaredoxin-S13 (150 aa).

The segment at 30–52 (PSSSSSSLSWLTSGSPKPTSISN) is disordered. Residues 31 to 44 (SSSSSSLSWLTSGS) show a composition bias toward low complexity. Residues 53-149 (KRSSNLVVME…PTLRQAGALW (97 aa)) form the Glutaredoxin domain. C73 provides a ligand contact to [2Fe-2S] cluster. The short motif at 147-150 (ALWL) is the Responsive for interaction with TGA factors element.

It belongs to the glutaredoxin family. CC-type subfamily.

It is found in the cytoplasm. The protein localises to the nucleus. Functionally, may only reduce GSH-thiol disulfides, but not protein disulfides. This is Monothiol glutaredoxin-S13 (GRXS13) from Arabidopsis thaliana (Mouse-ear cress).